We begin with the raw amino-acid sequence, 375 residues long: Paralyzed arrest at two-fold protein 6 (375 aa).

The disordered stretch occupies residues 1–51; it reads MSTLGRSKTPSRDEPKKPGVFEKLSGTLSRKKKAPEDEHGNQGGAHHATDE. Basic and acidic residues predominate over residues 10 to 20; it reads PSRDEPKKPGV. 2 Calponin-homology (CH) domains span residues 99–206 and 266–373; these read AQVV…LHYR and AHVK…TKYK.

It belongs to the parvin family. May interact (via calponin-homology (CH) 2 domain) with pat-4 (via kinase domain). May form a complex with unc-112 and pat-4. Component of an integrin containing attachment complex, composed of at least pat-2, pat-3, pat-4, pat-6, unc-52, unc-97 and unc-112. Expressed from 1.5 stage embryos, mostly within the muscle cells. In adult hermaphrodites, expressed in the attachments of other muscles, including the uterine, anal depressor, anal sphincter, and vulval muscles, as well as in the spermatheca and the distal tip cells. Expressed in mechanosensory receptor neurons ALML/R, PLML/R, AVM, and PVM. Localizes at body wall muscle attachments.

It localises to the cytoplasm. Its subcellular location is the cytoskeleton. The protein localises to the myofibril. It is found in the sarcomere. The protein resides in the m line. It localises to the perikaryon. Its subcellular location is the cell projection. The protein localises to the axon. Functionally, involved in the regulation of cell adhesion and cytoskeleton organization. Component of an integrin containing attachment complex, which is required for muscle development and maintenance. During embryonic development, required to recruit cpna-1, unc-89 and myofilaments to newly forming integrin attachments composed of integrins pat-2/pat-3, pat-4 and unc-112. Also required to reposition the integrin-based attachments so that they form the highly ordered array of dense body and M-line attachments that are characteristic of mature muscle cells. During the formation of neuromuscular junctions at the larval stage, negatively regulates membrane protrusion from body wall muscles. This is Paralyzed arrest at two-fold protein 6 from Caenorhabditis elegans.